Reading from the N-terminus, the 352-residue chain is Peptide chain release factor 1 (352 aa).

The residue at position 233 (Q233) is an N5-methylglutamine. The disordered stretch occupies residues 288-309 (NAKDRKEQVGSGDRSERIRTYN). Residues 289–306 (AKDRKEQVGSGDRSERIR) show a composition bias toward basic and acidic residues.

Belongs to the prokaryotic/mitochondrial release factor family. In terms of processing, methylated by PrmC. Methylation increases the termination efficiency of RF1.

The protein resides in the cytoplasm. Peptide chain release factor 1 directs the termination of translation in response to the peptide chain termination codons UAG and UAA. This chain is Peptide chain release factor 1, found in Helicobacter pylori (strain Shi470).